An 811-amino-acid polypeptide reads, in one-letter code: Metal transporter cnnm-1 (811 aa).

The N-terminal stretch at 1-24 (MSASCLRLLTLSLFILGQCNVTAA) is a signal peptide. N-linked (GlcNAc...) asparagine glycans are attached at residues Asn-20, Asn-49, Asn-61, and Asn-122. The Extracellular segment spans residues 25 to 204 (QNGVDDEVTT…KEYFLPLPLQ (180 aa)). The CNNM transmembrane domain occupies 197–376 (YFLPLPLQIA…TDNGQVSNEL (180 aa)). The chain crosses the membrane as a helical span at residues 205 to 225 (IACIGFLLCLSALFSGLTLGL). Residues 226-259 (MSLTPQELELVIKSGAIKEQKCAAKILPVRKKGN) are Cytoplasmic-facing. Residues 260-280 (LLLCSLLLGNVIVNSAISILM) form a helical membrane-spanning segment. The Extracellular segment spans residues 281-284 (GELT). Residues 285-305 (TGIYALIGSTMGIVIFGEILP) form a helical membrane-spanning segment. At 306–315 (QSICVKKGLE) the chain is on the cytoplasmic side. Residues 316 to 336 (VGAHTISITQLFIFLTFPIAW) traverse the membrane as a helical segment. Residues 337–811 (PVSKLLDCLL…EEEMALLDQP (475 aa)) lie on the Extracellular side of the membrane. 2 consecutive CBS domains span residues 394-456 (MTKI…NFTV) and 462-530 (YHKH…INDE). N-linked (GlcNAc...) asparagine glycosylation is found at Asn-435 and Asn-453. Positions 741–760 (DVSHNSSAHNSNLSLVEKPG) are disordered. Over residues 743–755 (SHNSSAHNSNLSL) the composition is skewed to low complexity. N-linked (GlcNAc...) asparagine glycans are attached at residues Asn-745 and Asn-752.

The protein belongs to the ACDP family. As to expression, highly expressed in the intestine and in neurons, but it is also expressed in a variety of tissues including the pharynx, hypodermis, rectum and in muscles.

The protein resides in the basolateral cell membrane. Functionally, probable metal transporter. Probably acts redundantly with the other metal transport proteins cnnm-2, cnnm-3, cnnm-4 and cnnm-5 to regulate Mg(2+) homeostasis. Promotes postembryonic gonad development by regulating Mg(2+) levels, probably via AMPK signaling. This is Metal transporter cnnm-1 from Caenorhabditis elegans.